The chain runs to 121 residues: RING-box protein HRT1 (121 aa).

Residues 1 to 31 (MSNEVDRMDVDEDESQNIAQSSNQSAPVETK) are disordered. Serine 15 bears the Phosphoserine mark. The span at 16-26 (QNIAQSSNQSA) shows a compositional bias: low complexity. Zn(2+) is bound by residues cysteine 55, cysteine 58, cysteine 66, cysteine 69, cysteine 81, cysteine 88, histidine 90, histidine 93, histidine 95, cysteine 107, and aspartate 110. The RING-type zinc-finger motif lies at 55–111 (CAICRNHIMEPCIECQPKAMTDTDNECVAAWGVCNHAFHLHCINKWIKTRDACPLDN).

It belongs to the RING-box family. As to quaternary structure, component of multiple cullin-RING ligases (CRLs) composed of 4 subunits: the RING protein HRT1, a cullin, a linker protein, and one of many alternative substrate receptors. Component of SCF E3 ubiquitin ligase complexes containing the cullin CDC53, the linker protein SKP1/CBF3D, and substrate receptors containing F-box motifs like DAS1 or GRR1. Component of RTT101(MMS1) E3 ubiquitin ligase complexes containing the cullin RTT101, the linker protein MMS1, and substrate receptors belonging to a protein family described as DCAF (DDB1- and CUL4-associated factor) like MMS22. Component of CRL3 E3 ubiquitin ligase complexes containing the cullin CUL3, the linker protein ELC1, and substrate receptors containing SOCS-box motifs like ELA1. Interacts with CDC53, CUL3, RTT101, CDC4 and CDC34/UBC3.

The protein resides in the cytoplasm. It localises to the nucleus. It functions in the pathway protein modification; protein ubiquitination. In terms of biological role, core component of multiple cullin-RING-based E3 ubiquitin-protein ligase complexes (CRLs), which mediate the ubiquitination of target proteins. Recruits the E2 ubiquitin-conjugating enzyme CDC34/UBC3 to the complex and brings it into close proximity to the substrate. Also stimulates CDC34/UBC3 autoubiquitination and promotes the neddylation of CDC53 and RTT101. Component of the SCF(CDC4) ubiquitin ligase required for ubiquitination of the cyclin-dependent kinase inhibitor SIC1 and for the G1-to-S phase transition. Component of the RTT101(MMS1-MMS22) ubiquitin ligase that promotes fork progression through damaged DNA or natural pause sites. Component of the CRL3(ELA1) ubiquitin ligase required for ubiquitination of RPB1, the largest subunit of RNA polymerase II (Pol II), which targets Pol II for proteasomal degradation in DNA-damaged cells. This chain is RING-box protein HRT1 (HRT1), found in Saccharomyces cerevisiae (strain ATCC 204508 / S288c) (Baker's yeast).